A 291-amino-acid chain; its full sequence is N-acetylmannosamine kinase (291 aa).

Residues 5–12 (AIDIGGTK) and 132–139 (GVGGGVVC) each bind ATP. Zn(2+)-binding residues include His156, Cys166, Cys168, and Cys173.

Belongs to the ROK (NagC/XylR) family. NanK subfamily. Homodimer.

It catalyses the reaction an N-acyl-D-mannosamine + ATP = an N-acyl-D-mannosamine 6-phosphate + ADP + H(+). The protein operates within amino-sugar metabolism; N-acetylneuraminate degradation; D-fructose 6-phosphate from N-acetylneuraminate: step 2/5. Its function is as follows. Catalyzes the phosphorylation of N-acetylmannosamine (ManNAc) to ManNAc-6-P. In Salmonella paratyphi B (strain ATCC BAA-1250 / SPB7), this protein is N-acetylmannosamine kinase.